A 376-amino-acid chain; its full sequence is MSKRDYYEVLGVGRDASEREIKKAYKRLAMKYHPDRNPGDKEAEASFKEVKEAYEILTDTDKKAAYDQFGHAGVDPNRGGGGFGGGGDFGDIFGDVFGDIFGGGRRGGQRQAARGSDLRYNLELSLEEAVRGLTKELKVPTLVGCDSCDGSGAKKGSSATTCGTCHGMGQVQMRQGFFAVQQTCPTCHGRGKIIKDPCSKCHGNGRVEKTKTLSVKIPAGVDTGDRIRLAGEGEAGEFGAPPGDLYVQVTVREHPIFVRDGNNLYCEVPISFAKAALGGEIEVPTLDGKVSLKIPAETQTGRMFRLRGKGVKSVRSHAVGDLLCKVVMETPVNLSERQKELLREFEASLTGESKKHSPKAEGFFDGVKKFFQDLNN.

The 66-residue stretch at 5–70 folds into the J domain; sequence DYYEVLGVGR…DKKAAYDQFG (66 aa). The CR-type zinc finger occupies 132 to 210; that stretch reads GLTKELKVPT…CHGNGRVEKT (79 aa). The Zn(2+) site is built by cysteine 145, cysteine 148, cysteine 162, cysteine 165, cysteine 184, cysteine 187, cysteine 198, and cysteine 201. CXXCXGXG motif repeat units follow at residues 145 to 152, 162 to 169, 184 to 191, and 198 to 205; these read CDSCDGSG, CGTCHGMG, CPTCHGRG, and CSKCHGNG.

This sequence belongs to the DnaJ family. Homodimer. Requires Zn(2+) as cofactor.

It is found in the cytoplasm. Participates actively in the response to hyperosmotic and heat shock by preventing the aggregation of stress-denatured proteins and by disaggregating proteins, also in an autonomous, DnaK-independent fashion. Unfolded proteins bind initially to DnaJ; upon interaction with the DnaJ-bound protein, DnaK hydrolyzes its bound ATP, resulting in the formation of a stable complex. GrpE releases ADP from DnaK; ATP binding to DnaK triggers the release of the substrate protein, thus completing the reaction cycle. Several rounds of ATP-dependent interactions between DnaJ, DnaK and GrpE are required for fully efficient folding. Also involved, together with DnaK and GrpE, in the DNA replication of plasmids through activation of initiation proteins. The chain is Chaperone protein DnaJ from Shewanella amazonensis (strain ATCC BAA-1098 / SB2B).